Here is a 106-residue protein sequence, read N- to C-terminus: MSKLHIKKGDIVFVNAGEDKGKTGRVLQVLVKDNRAIVEGINVVSKHTKPNAKNPQGGIEKKEAPIHLSNLNVVDPKSGKATRIGRKLNEKGALVRYSKKSGEEIK.

This sequence belongs to the universal ribosomal protein uL24 family. In terms of assembly, part of the 50S ribosomal subunit.

In terms of biological role, one of two assembly initiator proteins, it binds directly to the 5'-end of the 23S rRNA, where it nucleates assembly of the 50S subunit. One of the proteins that surrounds the polypeptide exit tunnel on the outside of the subunit. In Parabacteroides distasonis (strain ATCC 8503 / DSM 20701 / CIP 104284 / JCM 5825 / NCTC 11152), this protein is Large ribosomal subunit protein uL24.